We begin with the raw amino-acid sequence, 185 residues long: ATP-dependent protease subunit HslV (185 aa).

Residue Thr12 is part of the active site. Na(+)-binding residues include Ala168, Cys171, and Thr174.

This sequence belongs to the peptidase T1B family. HslV subfamily. As to quaternary structure, a double ring-shaped homohexamer of HslV is capped on each side by a ring-shaped HslU homohexamer. The assembly of the HslU/HslV complex is dependent on binding of ATP.

The protein localises to the cytoplasm. It carries out the reaction ATP-dependent cleavage of peptide bonds with broad specificity.. Allosterically activated by HslU binding. Its function is as follows. Protease subunit of a proteasome-like degradation complex believed to be a general protein degrading machinery. The sequence is that of ATP-dependent protease subunit HslV from Cereibacter sphaeroides (strain ATCC 17029 / ATH 2.4.9) (Rhodobacter sphaeroides).